The primary structure comprises 64 residues: UPF0337 protein SH2043 (64 aa).

The segment at 1 to 64 (MAEDKFEQAK…DKVKGNNDNK (64 aa)) is disordered. The segment covering 22 to 64 (DNKDLEKEGQNDKASGKAKEAVENVKNKANDLIDKVKGNNDNK) has biased composition (basic and acidic residues).

Belongs to the UPF0337 (CsbD) family.

This is UPF0337 protein SH2043 from Staphylococcus haemolyticus (strain JCSC1435).